Here is a 104-residue protein sequence, read N- to C-terminus: UPF0145 protein NP_2600A (104 aa).

This sequence belongs to the UPF0145 family.

This Natronomonas pharaonis (strain ATCC 35678 / DSM 2160 / CIP 103997 / JCM 8858 / NBRC 14720 / NCIMB 2260 / Gabara) (Halobacterium pharaonis) protein is UPF0145 protein NP_2600A.